Reading from the N-terminus, the 1080-residue chain is Carbamoyl phosphate synthase large chain (1080 aa).

The interval 1–403 (MPKRTDLRTI…SLQKAVRGLE (403 aa)) is carboxyphosphate synthetic domain. ATP contacts are provided by arginine 129, arginine 169, glycine 175, glycine 176, glutamate 208, valine 210, glutamate 215, glycine 241, valine 242, histidine 243, glutamine 285, and glutamate 299. One can recognise an ATP-grasp 1 domain in the interval 133-328 (RVAMQEIGLE…IAKIAAKLAV (196 aa)). Glutamine 285, glutamate 299, and asparagine 301 together coordinate Mg(2+). Residues glutamine 285, glutamate 299, and asparagine 301 each contribute to the Mn(2+) site. Residues 404-554 (TGKVGLEPTG…YSTYEEECEA (151 aa)) are oligomerization domain. Residues 555–942 (APSDRRKIMI…AFARAQEAGD (388 aa)) are carbamoyl phosphate synthetic domain. The region spanning 679–876 (QKLVQQLGLR…LAKIAARCMT (198 aa)) is the ATP-grasp 2 domain. Arginine 715, arginine 754, leucine 756, glutamate 761, glycine 787, valine 788, histidine 789, serine 790, glutamine 830, and glutamate 847 together coordinate ATP. Positions 830, 847, and 849 each coordinate Mg(2+). Residues glutamine 830, glutamate 847, and asparagine 849 each contribute to the Mn(2+) site. In terms of domain architecture, MGS-like spans 943–1080 (IRAPQPGRAF…LQELHKELQV (138 aa)). Positions 943–1080 (IRAPQPGRAF…LQELHKELQV (138 aa)) are allosteric domain.

It belongs to the CarB family. Composed of two chains; the small (or glutamine) chain promotes the hydrolysis of glutamine to ammonia, which is used by the large (or ammonia) chain to synthesize carbamoyl phosphate. Tetramer of heterodimers (alpha,beta)4. Mg(2+) is required as a cofactor. Requires Mn(2+) as cofactor.

It carries out the reaction hydrogencarbonate + L-glutamine + 2 ATP + H2O = carbamoyl phosphate + L-glutamate + 2 ADP + phosphate + 2 H(+). The catalysed reaction is hydrogencarbonate + NH4(+) + 2 ATP = carbamoyl phosphate + 2 ADP + phosphate + 2 H(+). It functions in the pathway amino-acid biosynthesis; L-arginine biosynthesis; carbamoyl phosphate from bicarbonate: step 1/1. Its pathway is pyrimidine metabolism; UMP biosynthesis via de novo pathway; (S)-dihydroorotate from bicarbonate: step 1/3. Its function is as follows. Large subunit of the glutamine-dependent carbamoyl phosphate synthetase (CPSase). CPSase catalyzes the formation of carbamoyl phosphate from the ammonia moiety of glutamine, carbonate, and phosphate donated by ATP, constituting the first step of 2 biosynthetic pathways, one leading to arginine and/or urea and the other to pyrimidine nucleotides. The large subunit (synthetase) binds the substrates ammonia (free or transferred from glutamine from the small subunit), hydrogencarbonate and ATP and carries out an ATP-coupled ligase reaction, activating hydrogencarbonate by forming carboxy phosphate which reacts with ammonia to form carbamoyl phosphate. In Xylella fastidiosa (strain 9a5c), this protein is Carbamoyl phosphate synthase large chain.